Here is a 133-residue protein sequence, read N- to C-terminus: MSWQAYVDEHLMCDIEGTGHHLTSAAILGHDGTVWAQSSNFPQFKPEEMKGIITEFDQAGTLAPTGMFIAGAKYMVLQGEQGAVIRGKKGAGGICIKKTGQALVMGIYDEPVAPGQCNMVVERLGDYLIDQGM.

This sequence belongs to the profilin family. Occurs in many kinds of cells as a complex with monomeric actin in a 1:1 ratio.

It localises to the cytoplasm. Its subcellular location is the cytoskeleton. Functionally, binds to actin and affects the structure of the cytoskeleton. At high concentrations, profilin prevents the polymerization of actin, whereas it enhances it at low concentrations. By binding to PIP2, it inhibits the formation of IP3 and DG. This chain is Profilin-3, found in Ambrosia artemisiifolia (Common ragweed).